The chain runs to 340 residues: Phosphoribosylformylglycinamidine cyclo-ligase (340 aa).

Belongs to the AIR synthase family.

It localises to the cytoplasm. It carries out the reaction 2-formamido-N(1)-(5-O-phospho-beta-D-ribosyl)acetamidine + ATP = 5-amino-1-(5-phospho-beta-D-ribosyl)imidazole + ADP + phosphate + H(+). The protein operates within purine metabolism; IMP biosynthesis via de novo pathway; 5-amino-1-(5-phospho-D-ribosyl)imidazole from N(2)-formyl-N(1)-(5-phospho-D-ribosyl)glycinamide: step 2/2. This chain is Phosphoribosylformylglycinamidine cyclo-ligase, found in Streptococcus pyogenes serotype M3 (strain ATCC BAA-595 / MGAS315).